Reading from the N-terminus, the 301-residue chain is Sulfate adenylyltransferase subunit 2 (301 aa).

It belongs to the PAPS reductase family. CysD subfamily. In terms of assembly, heterodimer composed of CysD, the smaller subunit, and CysN.

The enzyme catalyses sulfate + ATP + H(+) = adenosine 5'-phosphosulfate + diphosphate. The protein operates within sulfur metabolism; hydrogen sulfide biosynthesis; sulfite from sulfate: step 1/3. Its function is as follows. With CysN forms the ATP sulfurylase (ATPS) that catalyzes the adenylation of sulfate producing adenosine 5'-phosphosulfate (APS) and diphosphate, the first enzymatic step in sulfur assimilation pathway. APS synthesis involves the formation of a high-energy phosphoric-sulfuric acid anhydride bond driven by GTP hydrolysis by CysN coupled to ATP hydrolysis by CysD. The sequence is that of Sulfate adenylyltransferase subunit 2 from Citrifermentans bemidjiense (strain ATCC BAA-1014 / DSM 16622 / JCM 12645 / Bem) (Geobacter bemidjiensis).